Here is a 267-residue protein sequence, read N- to C-terminus: uncharacterized protein (267 aa).

Residues Met1–Thr55 are disordered. Positions Phe9–Glu24 are enriched in acidic residues. The span at Met29 to Lys46 shows a compositional bias: basic residues. 5 helical membrane-spanning segments follow: residues Tyr93–Leu115, Gly135–Val157, Ala173–Val195, Met199–Gln221, and Tyr234–Ile256.

The protein localises to the cell membrane. This is an uncharacterized protein from Bacillus subtilis (strain 168).